Consider the following 164-residue polypeptide: Phosphopantetheine adenylyltransferase (164 aa).

Thr10 is a binding site for substrate. ATP-binding positions include 10 to 11 (TF) and His18. Substrate is bound by residues Lys42, Leu74, and Arg88. ATP contacts are provided by residues 89 to 91 (GIR), Glu99, and 124 to 130 (YAFVSST).

The protein belongs to the bacterial CoaD family. In terms of assembly, homohexamer. Mg(2+) serves as cofactor.

The protein resides in the cytoplasm. It carries out the reaction (R)-4'-phosphopantetheine + ATP + H(+) = 3'-dephospho-CoA + diphosphate. It participates in cofactor biosynthesis; coenzyme A biosynthesis; CoA from (R)-pantothenate: step 4/5. In terms of biological role, reversibly transfers an adenylyl group from ATP to 4'-phosphopantetheine, yielding dephospho-CoA (dPCoA) and pyrophosphate. The sequence is that of Phosphopantetheine adenylyltransferase from Tolumonas auensis (strain DSM 9187 / NBRC 110442 / TA 4).